A 782-amino-acid polypeptide reads, in one-letter code: Endonuclease MutS2 (782 aa).

ATP is bound at residue 336–343 (GPNTGGKT). The 76-residue stretch at 707 to 782 (LDLRGYRYED…GFGVTVATLK (76 aa)) folds into the Smr domain.

The protein belongs to the DNA mismatch repair MutS family. MutS2 subfamily. As to quaternary structure, homodimer. Binds to stalled ribosomes, contacting rRNA.

Endonuclease that is involved in the suppression of homologous recombination and thus may have a key role in the control of bacterial genetic diversity. Functionally, acts as a ribosome collision sensor, splitting the ribosome into its 2 subunits. Detects stalled/collided 70S ribosomes which it binds and splits by an ATP-hydrolysis driven conformational change. Acts upstream of the ribosome quality control system (RQC), a ribosome-associated complex that mediates the extraction of incompletely synthesized nascent chains from stalled ribosomes and their subsequent degradation. Probably generates substrates for RQC. The protein is Endonuclease MutS2 of Staphylococcus aureus (strain MSSA476).